The sequence spans 428 residues: AP-1 complex subunit mu-2 (428 aa).

The MHD domain occupies 170 to 426 (KNEVFLDVIE…ITMAGEYELR (257 aa)).

It belongs to the adaptor complexes medium subunit family. In terms of assembly, adaptor protein complex 1 (AP-1) is a heterotetramer composed of two large adaptins (gamma-type subunit and beta-type subunit), a medium adaptin (mu-type subunit) and a small adaptin (sigma-type subunit). Ubiquitous.

Its subcellular location is the golgi apparatus. The protein resides in the trans-Golgi network membrane. The protein localises to the early endosome membrane. It is found in the cytoplasmic vesicle. It localises to the clathrin-coated vesicle membrane. Functionally, subunit of clathrin-associated adaptor protein complex 1 that plays a role in protein sorting at the trans-Golgi network and early endosomes (TGN/EE). The AP complexes mediate the recruitment of clathrin to membranes and the recognition of sorting signals within the cytosolic tails of transmembrane cargo molecules. Required for KNOLLE localization at the cell plate to mediate cytokinesis. Functions redundantly with AP1M1 in multiple post-Golgi trafficking pathways leading from the TGN to the vacuole, the plasma membrane, and the cell-division plane. The chain is AP-1 complex subunit mu-2 (AP1M2) from Arabidopsis thaliana (Mouse-ear cress).